The primary structure comprises 148 residues: Large ribosomal subunit protein uL15 (148 aa).

The disordered stretch occupies residues 1-51 (MNLSNLKPAEGSTKTRKRIGRGPGSGLGGTSTRGHKGAKSRSGYSKKIGFE). The span at 21-31 (RGPGSGLGGTS) shows a compositional bias: gly residues.

The protein belongs to the universal ribosomal protein uL15 family. In terms of assembly, part of the 50S ribosomal subunit.

Binds to the 23S rRNA. The polypeptide is Large ribosomal subunit protein uL15 (Phocaeicola vulgatus (strain ATCC 8482 / DSM 1447 / JCM 5826 / CCUG 4940 / NBRC 14291 / NCTC 11154) (Bacteroides vulgatus)).